Consider the following 128-residue polypeptide: Profilin (128 aa).

The protein belongs to the profilin family.

More likely to influence phosphoinositide metabolism than actin assembly. The sequence is that of Profilin from Homo sapiens (Human).